We begin with the raw amino-acid sequence, 187 residues long: Insulin-like growth factor 2 (187 aa).

Positions 1–23 are cleaved as a signal peptide; that stretch reads MCAARQILLLLLAFLAYALDSAA. Residues 25–51 form a b region; that stretch reads YGTAETLCGGELVDTLQFVCGDRGFYF. Intrachain disulfides connect Cys-32/Cys-71, Cys-44/Cys-84, and Cys-70/Cys-75. The c stretch occupies residues 52–64; it reads SRPVGRNNRRINR. The segment at 64–85 is a; the sequence is RGIVEECCFRSCDLALLETYCA. Positions 86–91 are d; the sequence is KSVKSE. A propeptide spans 92–187 (e peptide); that stretch reads RDLSATSLAG…ASPEATGPQE (96 aa). Residues 162–187 are disordered; sequence HRPLISLPSQRPPAPRASPEATGPQE.

It belongs to the insulin family.

The protein localises to the secreted. Its function is as follows. The insulin-like growth factors, isolated from plasma, are structurally and functionally related to insulin but have a much higher growth-promoting activity. Acts as a ligand for integrin which is required for IGF2 signaling. The sequence is that of Insulin-like growth factor 2 from Gallus gallus (Chicken).